Here is a 304-residue protein sequence, read N- to C-terminus: Acetyl-coenzyme A carboxylase carboxyl transferase subunit beta (304 aa).

The CoA carboxyltransferase N-terminal domain occupies 23–292 (VWTKCDSCGQ…PNPEAPREGV (270 aa)). Zn(2+) is bound by residues C27, C30, C46, and C49. A C4-type zinc finger spans residues 27 to 49 (CDSCGQVLYRAELERNLEVCPKC). The tract at residues 284 to 304 (NPEAPREGVVVPPVPDQEPEA) is disordered. The segment covering 295–304 (PPVPDQEPEA) has biased composition (pro residues).

It belongs to the AccD/PCCB family. In terms of assembly, acetyl-CoA carboxylase is a heterohexamer composed of biotin carboxyl carrier protein (AccB), biotin carboxylase (AccC) and two subunits each of ACCase subunit alpha (AccA) and ACCase subunit beta (AccD). The cofactor is Zn(2+).

The protein resides in the cytoplasm. The enzyme catalyses N(6)-carboxybiotinyl-L-lysyl-[protein] + acetyl-CoA = N(6)-biotinyl-L-lysyl-[protein] + malonyl-CoA. The protein operates within lipid metabolism; malonyl-CoA biosynthesis; malonyl-CoA from acetyl-CoA: step 1/1. Component of the acetyl coenzyme A carboxylase (ACC) complex. Biotin carboxylase (BC) catalyzes the carboxylation of biotin on its carrier protein (BCCP) and then the CO(2) group is transferred by the transcarboxylase to acetyl-CoA to form malonyl-CoA. The protein is Acetyl-coenzyme A carboxylase carboxyl transferase subunit beta of Shigella boydii serotype 18 (strain CDC 3083-94 / BS512).